A 281-amino-acid chain; its full sequence is Ribulose-5-phosphate-3-epimerase, chloroplastic (281 aa).

Residues 1–45 (MSTSAASLCCSSTQVNGFGLRPERSLLYQPTSFSFSRRRTHGIVK) constitute a chloroplast transit peptide. S63 is a binding site for substrate. H88, D90, and H121 together coordinate a divalent metal cation. Residue D90 is the Proton acceptor of the active site. Residues H121, 199–202 (GFGG), 232–234 (DGG), and 254–256 (GSA) contribute to the substrate site. D232 provides a ligand contact to a divalent metal cation. D232 acts as the Proton donor in catalysis.

This sequence belongs to the ribulose-phosphate 3-epimerase family. In terms of assembly, homooctamer. It depends on Co(2+) as a cofactor. The cofactor is Fe(2+). Mn(2+) serves as cofactor. Requires Zn(2+) as cofactor. In terms of tissue distribution, present in roots, seeds and flowers. Accumulates in nematode feeding sites (NFS).

It is found in the plastid. Its subcellular location is the chloroplast thylakoid membrane. It catalyses the reaction D-ribulose 5-phosphate = D-xylulose 5-phosphate. The protein operates within carbohydrate biosynthesis; Calvin cycle. Its function is as follows. Essential protein required during embryogenesis. Catalyzes the reversible epimerization of D-ribulose 5-phosphate to D-xylulose 5-phosphate. Essential for the early steps of nematode feeding sites (NFS, multinucleated root cells) formation induced by the root-knot nematodes Heterodera schachtii, Meloidogyne incognita, M.javanica and M.hapla. The protein is Ribulose-5-phosphate-3-epimerase, chloroplastic of Arabidopsis thaliana (Mouse-ear cress).